The following is a 241-amino-acid chain: Pre-rRNA-processing protein pno1 (241 aa).

The tract at residues 48 to 71 (APAKTSAEKKRGAKPQMRRVPIPP) is disordered. The residue at position 52 (Thr-52) is a Phosphothreonine. The KH domain occupies 162–214 (GDHLSRAIGRIAGQGGKTKFAIENASRTRIVLADSKIHILGGFTNIRIAKDAV).

Belongs to the PNO1 family. Component of the small ribosomal subunit, ribosomal RNA processing complex (SSU RRP complex).

Its subcellular location is the cytoplasm. It is found in the nucleus. The protein localises to the nucleolus. In terms of biological role, required for small ribosomal subunit (SSU) synthesis. Has a role in the processing of early nucleolar and late cytoplasmic pre-RNA species. The polypeptide is Pre-rRNA-processing protein pno1 (rbp28) (Schizosaccharomyces pombe (strain 972 / ATCC 24843) (Fission yeast)).